We begin with the raw amino-acid sequence, 351 residues long: Hydroxymethylglutaryl-CoA synthase (351 aa).

D28 is a (3S)-3-hydroxy-3-methylglutaryl-CoA binding site. The active-site Proton donor/acceptor is the E80. Residues C112 and T153 each coordinate (3S)-3-hydroxy-3-methylglutaryl-CoA. Residue C112 is the Acyl-thioester intermediate of the active site. Residue R199 participates in CoA binding. The (3S)-3-hydroxy-3-methylglutaryl-CoA site is built by T201 and H234. The Proton donor/acceptor role is filled by H234. Position 239 (K239) interacts with CoA. 3 residues coordinate (3S)-3-hydroxy-3-methylglutaryl-CoA: R243, N266, and S296.

It belongs to the thiolase-like superfamily. Archaeal HMG-CoA synthase family. As to quaternary structure, interacts with acetoacetyl-CoA thiolase that catalyzes the precedent step in the pathway and with a DUF35 protein. The acetoacetyl-CoA thiolase/HMG-CoA synthase complex channels the intermediate via a fused CoA-binding site, which allows for efficient coupling of the endergonic thiolase reaction with the exergonic HMGCS reaction.

The enzyme catalyses acetoacetyl-CoA + acetyl-CoA + H2O = (3S)-3-hydroxy-3-methylglutaryl-CoA + CoA + H(+). It functions in the pathway metabolic intermediate biosynthesis; (R)-mevalonate biosynthesis; (R)-mevalonate from acetyl-CoA: step 2/3. In terms of biological role, catalyzes the condensation of acetyl-CoA with acetoacetyl-CoA to form 3-hydroxy-3-methylglutaryl-CoA (HMG-CoA). Functions in the mevalonate (MVA) pathway leading to isopentenyl diphosphate (IPP), a key precursor for the biosynthesis of isoprenoid compounds that are building blocks of archaeal membrane lipids. The chain is Hydroxymethylglutaryl-CoA synthase from Picrophilus torridus (strain ATCC 700027 / DSM 9790 / JCM 10055 / NBRC 100828 / KAW 2/3).